Reading from the N-terminus, the 147-residue chain is Cytochrome c-type biogenesis protein CcmE 1 (147 aa).

Residues 1–9 are Cytoplasmic-facing; that stretch reads MKSLKKQRR. Residues 10-30 form a helical; Signal-anchor for type II membrane protein membrane-spanning segment; the sequence is IQVIILATVALVLATGLIGYA. The Periplasmic portion of the chain corresponds to 31–147; it reads MRDGINFFRA…EQGVYQAPES (117 aa). 2 residues coordinate heme: histidine 123 and tyrosine 127.

It belongs to the CcmE/CycJ family.

Its subcellular location is the cell inner membrane. Heme chaperone required for the biogenesis of c-type cytochromes. Transiently binds heme delivered by CcmC and transfers the heme to apo-cytochromes in a process facilitated by CcmF and CcmH. In Ruegeria pomeroyi (strain ATCC 700808 / DSM 15171 / DSS-3) (Silicibacter pomeroyi), this protein is Cytochrome c-type biogenesis protein CcmE 1.